We begin with the raw amino-acid sequence, 92 residues long: MTKLAQWLWALALLGSTWAALTMGALGLELPSSCREVLWPLPAYLLVSAGCYALGTVGYRVATFHDCEDAARELQSQIQEARADLTRRGLRF.

2 helical membrane-spanning segments follow: residues 8-28 (LWALALLGSTWAALTMGALGL) and 37-57 (VLWPLPAYLLVSAGCYALGTV).

This sequence belongs to the DPM3 family. As to quaternary structure, component of the dolichol-phosphate mannose (DPM) synthase complex composed of DPM1, DPM2 and DPM3; within the complex, associates with DPM1 via its C-terminal domain and with DPM2 via its N-terminal portion. This interaction stabilizes DPM1 protein.

The protein resides in the endoplasmic reticulum membrane. The protein operates within protein modification; protein glycosylation. Functionally, stabilizer subunit of the dolichol-phosphate mannose (DPM) synthase complex; tethers catalytic subunit DPM1 to the endoplasmic reticulum. In Bos taurus (Bovine), this protein is Dolichol-phosphate mannosyltransferase subunit 3 (DPM3).